A 560-amino-acid chain; its full sequence is RNA polymerase-associated protein C651.09c (560 aa).

Disordered regions lie at residues 15 to 74 (DDSD…KNPY) and 128 to 207 (YMAQ…KVEQ). A compositionally biased stretch (basic and acidic residues) spans 148-171 (GKRDKLTELKKRRQERSARSVSER). Over residues 180–195 (DYEEQNESEKSEEEEG) the composition is skewed to acidic residues. A Phosphoserine modification is found at Ser-197. The Plus3 domain maps to 214–345 (SANLYDLNAI…KLNDLRDMSK (132 aa)). The stretch at 387–456 (AGNAELVKEI…RRRLSAAATA (70 aa)) forms a coiled coil. Residues 440 to 449 (EQRMNEERRR) show a composition bias toward basic and acidic residues. The segment at 440–486 (EQRMNEERRRLSAAATATPMSAPTSVLTGTSPQPSPSLSTSIMSTPK) is disordered. Residues 451-480 (SAAATATPMSAPTSVLTGTSPQPSPSLSTS) show a composition bias toward low complexity. Phosphoserine occurs at positions 502 and 506.

In terms of assembly, component of the PAF1 complex.

It localises to the nucleus. The protein resides in the nucleoplasm. Its function is as follows. The PAF1 complex is a multifunctional complex. Involved in transcription initiation via genetic interactions with TATA-binding proteins. Involved in elongation. Also has a role in transcription-coupled histone modification. Important for TATA site selection by TBP. Directly or indirectly regulates the DNA-binding properties of the TATA box-binding protein, and the relative activities of different TATA elements. This Schizosaccharomyces pombe (strain 972 / ATCC 24843) (Fission yeast) protein is RNA polymerase-associated protein C651.09c.